The following is a 497-amino-acid chain: Glutamyl-tRNA(Gln) amidotransferase subunit A (497 aa).

Catalysis depends on charge relay system residues Lys80 and Ser155. Ser179 serves as the catalytic Acyl-ester intermediate.

Belongs to the amidase family. GatA subfamily. Heterotrimer of A, B and C subunits.

The catalysed reaction is L-glutamyl-tRNA(Gln) + L-glutamine + ATP + H2O = L-glutaminyl-tRNA(Gln) + L-glutamate + ADP + phosphate + H(+). Functionally, allows the formation of correctly charged Gln-tRNA(Gln) through the transamidation of misacylated Glu-tRNA(Gln) in organisms which lack glutaminyl-tRNA synthetase. The reaction takes place in the presence of glutamine and ATP through an activated gamma-phospho-Glu-tRNA(Gln). This Streptomyces coelicolor (strain ATCC BAA-471 / A3(2) / M145) protein is Glutamyl-tRNA(Gln) amidotransferase subunit A (gatA).